A 100-amino-acid polypeptide reads, in one-letter code: Aspartyl/glutamyl-tRNA(Asn/Gln) amidotransferase subunit C (100 aa).

It belongs to the GatC family. As to quaternary structure, heterotrimer of A, B and C subunits.

The catalysed reaction is L-glutamyl-tRNA(Gln) + L-glutamine + ATP + H2O = L-glutaminyl-tRNA(Gln) + L-glutamate + ADP + phosphate + H(+). It carries out the reaction L-aspartyl-tRNA(Asn) + L-glutamine + ATP + H2O = L-asparaginyl-tRNA(Asn) + L-glutamate + ADP + phosphate + 2 H(+). In terms of biological role, allows the formation of correctly charged Asn-tRNA(Asn) or Gln-tRNA(Gln) through the transamidation of misacylated Asp-tRNA(Asn) or Glu-tRNA(Gln) in organisms which lack either or both of asparaginyl-tRNA or glutaminyl-tRNA synthetases. The reaction takes place in the presence of glutamine and ATP through an activated phospho-Asp-tRNA(Asn) or phospho-Glu-tRNA(Gln). The polypeptide is Aspartyl/glutamyl-tRNA(Asn/Gln) amidotransferase subunit C (Staphylococcus saprophyticus subsp. saprophyticus (strain ATCC 15305 / DSM 20229 / NCIMB 8711 / NCTC 7292 / S-41)).